The sequence spans 263 residues: Cytochrome c oxidase subunit 3 (263 aa).

The next 7 helical transmembrane spans lie at Pro-9–Leu-29, Phe-40–Trp-60, Gly-84–Phe-104, Ile-129–Ala-149, Ala-161–Tyr-181, Thr-198–Leu-218, and Ala-241–Trp-261.

This sequence belongs to the cytochrome c oxidase subunit 3 family. In terms of assembly, component of the cytochrome c oxidase (complex IV, CIV), a multisubunit enzyme composed of a catalytic core of 3 subunits and several supernumerary subunits. The complex exists as a monomer or a dimer and forms supercomplexes (SCs) in the inner mitochondrial membrane with ubiquinol-cytochrome c oxidoreductase (cytochrome b-c1 complex, complex III, CIII).

The protein resides in the mitochondrion inner membrane. The catalysed reaction is 4 Fe(II)-[cytochrome c] + O2 + 8 H(+)(in) = 4 Fe(III)-[cytochrome c] + 2 H2O + 4 H(+)(out). Functionally, component of the cytochrome c oxidase, the last enzyme in the mitochondrial electron transport chain which drives oxidative phosphorylation. The respiratory chain contains 3 multisubunit complexes succinate dehydrogenase (complex II, CII), ubiquinol-cytochrome c oxidoreductase (cytochrome b-c1 complex, complex III, CIII) and cytochrome c oxidase (complex IV, CIV), that cooperate to transfer electrons derived from NADH and succinate to molecular oxygen, creating an electrochemical gradient over the inner membrane that drives transmembrane transport and the ATP synthase. Cytochrome c oxidase is the component of the respiratory chain that catalyzes the reduction of oxygen to water. Electrons originating from reduced cytochrome c in the intermembrane space (IMS) are transferred via the dinuclear copper A center (CU(A)) of subunit 2 and heme A of subunit 1 to the active site in subunit 1, a binuclear center (BNC) formed by heme A3 and copper B (CU(B)). The BNC reduces molecular oxygen to 2 water molecules using 4 electrons from cytochrome c in the IMS and 4 protons from the mitochondrial matrix. The polypeptide is Cytochrome c oxidase subunit 3 (COIII) (Locusta migratoria (Migratory locust)).